We begin with the raw amino-acid sequence, 145 residues long: Transmembrane protein 170A (145 aa).

The Lumenal segment spans residues 1 to 50 (MIEALIVGEMQDVQIGFVKQILSLNLVPRSNNTTCGNNTSLCDFSEMWYG). N31 and N37 each carry an N-linked (GlcNAc...) asparagine glycan. The helical transmembrane segment at 51-71 (VFLWAVVSSLIFHLPAALLAL) threads the bilayer. Over 72-81 (ATLRRHKVAR) the chain is Cytoplasmic. A helical membrane pass occupies residues 82 to 102 (FFPLGILLMGIIGPLFGGVLT). The Lumenal portion of the chain corresponds to 103–117 (SAAIAGVYKAAGKSM). A helical transmembrane segment spans residues 118 to 138 (FSLEALVFGVGQSLFIFIISF). Residues 139 to 145 (LRILATL) are Cytoplasmic-facing.

It belongs to the TMEM170 family.

The protein resides in the endoplasmic reticulum membrane. It is found in the nucleus envelope. May regulate membrane morphogenesis in the endoplasmic reticulum (ER) by promoting ER sheet formation at the expense of ER tubules. The polypeptide is Transmembrane protein 170A (tmem170a) (Danio rerio (Zebrafish)).